Consider the following 281-residue polypeptide: Ribosomal RNA small subunit methyltransferase J (281 aa).

S-adenosyl-L-methionine is bound by residues 129-130 (RD), 145-146 (ER), and Asp199.

The protein belongs to the methyltransferase superfamily. RsmJ family.

It localises to the cytoplasm. The enzyme catalyses guanosine(1516) in 16S rRNA + S-adenosyl-L-methionine = N(2)-methylguanosine(1516) in 16S rRNA + S-adenosyl-L-homocysteine + H(+). Its function is as follows. Specifically methylates the guanosine in position 1516 of 16S rRNA. This is Ribosomal RNA small subunit methyltransferase J from Laribacter hongkongensis (strain HLHK9).